The chain runs to 718 residues: uncharacterized protein (718 aa).

The protein belongs to the asfivirus C717R family.

It is found in the virion. This is an uncharacterized protein from African swine fever virus (isolate Pig/Kenya/KEN-50/1950) (ASFV).